We begin with the raw amino-acid sequence, 753 residues long: Ion-translocating oxidoreductase complex subunit C (753 aa).

4Fe-4S ferredoxin-type domains are found at residues 367 to 397 and 407 to 436; these read EMGE…QQLY and KATA…VQYF. 8 residues coordinate [4Fe-4S] cluster: cysteine 377, cysteine 380, cysteine 383, cysteine 387, cysteine 416, cysteine 419, cysteine 422, and cysteine 426. Disordered regions lie at residues 517-561, 606-625, 640-659, and 705-735; these read AKPD…RKAA, RKAE…PVDP, and AKAR…AVAA. The segment covering 526-537 has biased composition (basic and acidic residues); sequence AAREARKAEARA. Composition is skewed to low complexity over residues 610–622, 644–656, and 712–735; these read QQVA…VAEP and QQAA…AVAA.

This sequence belongs to the 4Fe4S bacterial-type ferredoxin family. RnfC subfamily. The complex is composed of six subunits: RnfA, RnfB, RnfC, RnfD, RnfE and RnfG. [4Fe-4S] cluster serves as cofactor.

It localises to the cell inner membrane. Functionally, part of a membrane-bound complex that couples electron transfer with translocation of ions across the membrane. This is Ion-translocating oxidoreductase complex subunit C from Klebsiella pneumoniae (strain 342).